The following is a 359-amino-acid chain: Popy class I histocompatibility antigen, alpha chain E (359 aa).

The N-terminal stretch at 1–18 (GTLLLLLSEALALTETWA) is a signal peptide. An alpha-1 region spans residues 19–108 (GSHSLKYFHT…LRGYYNQTEA (90 aa)). At 19–302 (GSHSLKYFHT…EPASQTTIPI (284 aa)) the chain is on the extracellular side. The N-linked (GlcNAc...) asparagine glycan is linked to Asn104. An alpha-2 region spans residues 109-200 (GSHTLQWMHG…EKGKETLLHL (92 aa)). Disulfide bonds link Cys119–Cys182 and Cys221–Cys277. The tract at residues 201-292 (DPPKTHVTHH…GLPEPLTLRW (92 aa)) is alpha-3. The Ig-like C1-type domain occupies 203–291 (PKTHVTHHRI…EGLPEPLTLR (89 aa)). The connecting peptide stretch occupies residues 293 to 302 (EPASQTTIPI). Residues 303–326 (VGIFAGLVLLGAVVTGATVVAAVM) traverse the membrane as a helical segment. Residues 327 to 359 (WRKKSSGGKGGSYSKAEWSDSAQGSESLTACKA) lie on the Cytoplasmic side of the membrane. A disordered region spans residues 330 to 359 (KSSGGKGGSYSKAEWSDSAQGSESLTACKA). The segment covering 346–359 (DSAQGSESLTACKA) has biased composition (polar residues). Ser351 is subject to Phosphoserine.

The protein belongs to the MHC class I family. Heterodimer of an alpha chain and a beta chain (beta-2-microglobulin).

The protein localises to the membrane. Its function is as follows. Involved in the presentation of foreign antigens to the immune system. The sequence is that of Popy class I histocompatibility antigen, alpha chain E (Popy-E) from Pongo pygmaeus (Bornean orangutan).